The sequence spans 88 residues: Large ribosomal subunit protein bL27 (88 aa).

The tract at residues 1-21 (MAHKKGQGSTQNNRDSAGRRL) is disordered.

Belongs to the bacterial ribosomal protein bL27 family.

This Helicobacter pylori (strain J99 / ATCC 700824) (Campylobacter pylori J99) protein is Large ribosomal subunit protein bL27.